Consider the following 875-residue polypeptide: Neurotrypsin (875 aa).

An N-terminal signal peptide occupies residues 1–20; the sequence is MTLARFALALLFGVLPEVVG. Asparagine 26 carries an N-linked (GlcNAc...) asparagine glycan. The interval 51–72 is disordered; sequence QRHRRTRPPPPLPRFPRPPRAL. Residues 58 to 71 show a composition bias toward pro residues; the sequence is PPPPLPRFPRPPRA. The Kringle domain occupies 93-165; sequence CPAGEPWVSV…GKVDWGYCDC (73 aa). Intrachain disulfides connect cysteine 93/cysteine 165, cysteine 109/cysteine 149, cysteine 138/cysteine 163, cysteine 195/cysteine 259, cysteine 208/cysteine 269, cysteine 239/cysteine 249, cysteine 305/cysteine 369, cysteine 318/cysteine 379, cysteine 349/cysteine 359, cysteine 412/cysteine 475, cysteine 425/cysteine 485, cysteine 455/cysteine 465, cysteine 525/cysteine 589, cysteine 538/cysteine 599, cysteine 569/cysteine 579, cysteine 619/cysteine 750, cysteine 661/cysteine 677, cysteine 765/cysteine 831, cysteine 794/cysteine 808, and cysteine 821/cysteine 850. 4 consecutive SRCR domains span residues 170-271, 280-381, 387-487, and 500-601; these read VRLR…MCSF, IRLV…SCTP, IRLA…ACYP, and VRLM…ICDY. Residues 619–630 form a zymogen activation region region; the sequence is CGLRLLHRRQKR. Residues 631–874 enclose the Peptidase S1 domain; that stretch reads IIGGKNSLRG…FVPWIKSVTK (244 aa). The active-site Charge relay system is histidine 676. Asparagine 683 is a glycosylation site (N-linked (GlcNAc...) asparagine). Aspartate 726 (charge relay system) is an active-site residue. The Charge relay system role is filled by serine 825.

Belongs to the peptidase S1 family.

It localises to the secreted. Functionally, plays a role in neuronal plasticity and the proteolytic action may subserve structural reorganizations associated with learning and memory operations. The protein is Neurotrypsin (PRSS12) of Saguinus labiatus (Red-chested mustached tamarin).